The sequence spans 68 residues: Phycobilisome 7.8 kDa linker polypeptide, allophycocyanin-associated, core (68 aa).

Residues 2–57 (ARLFKVTACVPSQTRIRTQRELQNTYFTKLVPFENWFREQQRIMKMGGKIVKVELA) enclose the CpcD-like domain.

The protein belongs to the phycobilisome linker protein family.

The protein resides in the cellular thylakoid membrane. In terms of biological role, rod linker protein, associated with allophycocyanin. Linker polypeptides determine the state of aggregation and the location of the disk-shaped phycobiliprotein units within the phycobilisome and modulate their spectroscopic properties in order to mediate a directed and optimal energy transfer. The sequence is that of Phycobilisome 7.8 kDa linker polypeptide, allophycocyanin-associated, core (apcC) from Microchaete diplosiphon (Fremyella diplosiphon).